The sequence spans 132 residues: ATP synthase epsilon chain (132 aa).

This sequence belongs to the ATPase epsilon chain family. F-type ATPases have 2 components, CF(1) - the catalytic core - and CF(0) - the membrane proton channel. CF(1) has five subunits: alpha(3), beta(3), gamma(1), delta(1), epsilon(1). CF(0) has four main subunits: a, b, b' and c.

The protein localises to the cellular chromatophore membrane. Functionally, produces ATP from ADP in the presence of a proton gradient across the membrane. The sequence is that of ATP synthase epsilon chain (atpC) from Rhodobacter capsulatus (Rhodopseudomonas capsulata).